Consider the following 203-residue polypeptide: Twist-related protein 1 (203 aa).

Over residues 1 to 18 (MMQDVSSSPVSPADDSLS) the composition is skewed to low complexity. The tract at residues 1 to 106 (MMQDVSSSPV…GGGSPQSYEE (106 aa)) is disordered. A compositionally biased stretch (basic residues) spans 34–43 (RGGRKRRSSS). Gly residues-rich tracts occupy residues 47–66 (AGGG…GGDE) and 81–100 (GCGG…GGGS). In terms of domain architecture, bHLH spans 109–160 (TQRVMANVRERQRTQSLNEAFAALRKIIPTLPSDKLSKIQTLKLAARYIDFL). Positions 162 to 192 (QVLQSDELDSKMASCSYVAHERLSYAFSVWR) are sufficient for transactivation activity.

Efficient DNA binding requires dimerization with another bHLH protein. Homodimer or heterodimer with E proteins such as TCF3. ID1 binds preferentially to TCF3 but does not interact efficiently with TWIST1 so ID1 levels control the amount of TCF3 available to dimerize with TWIST and thus determine the type of dimer formed.

Its subcellular location is the nucleus. Acts as a transcriptional regulator. Inhibits myogenesis by sequestrating E proteins, inhibiting trans-activation by MEF2, and inhibiting DNA-binding by MYOD1 through physical interaction. This interaction probably involves the basic domains of both proteins. Also represses expression of pro-inflammatory cytokines such as TNFA and IL1B. Regulates cranial suture patterning and fusion. Activates transcription as a heterodimer with E proteins. Regulates gene expression differentially, depending on dimer composition. Homodimers induce expression of FGFR2 and POSTN while heterodimers repress FGFR2 and POSTN expression and induce THBS1 expression. Heterodimerization is also required for osteoblast differentiation. Represses the activity of the circadian transcriptional activator: NPAS2-BMAL1 heterodimer. This Pongo pygmaeus (Bornean orangutan) protein is Twist-related protein 1 (TWIST1).